Consider the following 440-residue polypeptide: Ankyrin repeat and MYND domain-containing protein 2 (440 aa).

ANK repeat units lie at residues 45-74 (NGMTPLMHAAYKGKLEMCKLLLRHGADASC), 79-108 (HGYTALMFAALSGNKDITWVMLEAGAETDV), and 159-188 (KLAGPLHKIITTTNLHPVKIVMLVSENPLL). Residues cysteine 320, cysteine 323, cysteine 332, cysteine 335, cysteine 341, cysteine 345, histidine 353, and cysteine 357 each contribute to the Zn(2+) site. The MYND-type zinc finger occupies 320 to 357 (CTTCGEKGASKRCSVCKMVIYCDQTCQKTHWFAHKKMC). Basic and acidic residues predominate over residues 371-381 (AAKHKRQEEKN). Residues 371–440 (AAKHKRQEEK…APTGPQLSEE (70 aa)) form a disordered region.

As to quaternary structure, interacts with the retinal-specific guanylyl cyclase GC1.

The protein localises to the cell projection. Its subcellular location is the cilium. May be involved in the trafficking of signaling proteins to the cilia. The chain is Ankyrin repeat and MYND domain-containing protein 2 (Ankmy2) from Mus musculus (Mouse).